Consider the following 260-residue polypeptide: Thrombin-like enzyme bhalternin (260 aa).

The first 18 residues, 1-18 (MVLIRVLANLLILQLSYA), serve as a signal peptide directing secretion. The propeptide occupies 19–24 (QKASEL). Residues 25–251 (VIGGDECNIN…YSEWIQSIIA (227 aa)) form the Peptidase S1 domain. 5 disulfide bridges follow: Cys31-Cys165, Cys50-Cys66, Cys144-Cys212, Cys176-Cys191, and Cys202-Cys227. N-linked (GlcNAc...) asparagine glycosylation occurs at Asn44. Asn81 carries an N-linked (GlcNAc...) asparagine glycan.

This sequence belongs to the peptidase S1 family. Snake venom subfamily. As to quaternary structure, monomer. As to expression, expressed by the venom gland.

It is found in the secreted. Its activity is regulated as follows. Inhibited by benzamidine and partially inhibited by EDTA. Its function is as follows. Thrombin-like snake venom serine protease that induces blood clotting in vitro, defibrinogenation in vivo (by intraperitoneal injection into mice), albuminolytic and fibrinogenolytic activities. Preferentially cleaves the alpha chain of fibrinogen (FGA). Causes hemolysis in the heart, causes apparent hyperemia and lymphocytic interstitial pneumonitis in the lung, causes necrosis and inflammatory infiltrate in the liver, and causes glomerular congestion in the kidney. Also provokes a drastic myonecrosis. This is Thrombin-like enzyme bhalternin from Bothrops alternatus (Urutu).